Reading from the N-terminus, the 500-residue chain is Nuclear distribution protein PAC1 (500 aa).

7 WD repeats span residues His125–Gln164, Ala169–Ala219, Gly225–Ser265, Gly268–Gly310, Gln338–Asp378, Glu397–Leu436, and Ile459–Leu500.

This sequence belongs to the WD repeat LIS1/nudF family. Self-associates. Interacts with NDL1 and dynein.

The protein resides in the cytoplasm. It localises to the cytoskeleton. The protein localises to the spindle pole. Its function is as follows. Positively regulates the activity of the minus-end directed microtubule motor protein dynein. Plays a central role in positioning the mitotic spindle at the bud neck during cell division. Targets cytoplasmic dynein to microtubule plus ends, thereby promoting dynein-mediated microtubule sliding along the bud cortex and consequently the movement of the mitotic spindle to the bud neck. This chain is Nuclear distribution protein PAC1, found in Komagataella phaffii (strain GS115 / ATCC 20864) (Yeast).